Reading from the N-terminus, the 228-residue chain is Small ribosomal subunit protein uS3 (228 aa).

In terms of domain architecture, KH type-2 spans 39-107; the sequence is VREFIRERLK…PVHINIEEIR (69 aa).

It belongs to the universal ribosomal protein uS3 family. In terms of assembly, part of the 30S ribosomal subunit. Forms a tight complex with proteins S10 and S14.

Binds the lower part of the 30S subunit head. Binds mRNA in the 70S ribosome, positioning it for translation. The protein is Small ribosomal subunit protein uS3 of Halorhodospira halophila (strain DSM 244 / SL1) (Ectothiorhodospira halophila (strain DSM 244 / SL1)).